Here is a 414-residue protein sequence, read N- to C-terminus: MNQDLIAIGKRAQNAANKLALMNTATKNKALLQLADDLIKNKNQIIAANQQDLAAATQMPTKFTDRLMVNSQRIADMANGLRTIADLNDPTSQIDKGWITKDGLQILQRRVPLGVIGIIFEARPNVTVDATGLTFKSGNAVILRGGKEAIQTNTALVKILRESLQSQHLPVDAVQLITDTSHAIADEMMNLTDYIDVLIPRGGRALIQRVVTTATVPVIETGAGNCHIYIDKDADLTMATNITVNAKVQRPSVCNAAEKLLIHRDIAAKFLPVIAKALMEHGVQLRGDETACQLVSTIRPVTEEDWDTEYNDLIMAVKIVDSLDDAISHINHYSTHHSESIITNNITRGRYFQQAINSACVYVNASTRFTDGGEFGFGAEIGISTQKLHARGPMGLQQLTTIKYEITGNGQIRK.

This sequence belongs to the gamma-glutamyl phosphate reductase family.

Its subcellular location is the cytoplasm. The catalysed reaction is L-glutamate 5-semialdehyde + phosphate + NADP(+) = L-glutamyl 5-phosphate + NADPH + H(+). The protein operates within amino-acid biosynthesis; L-proline biosynthesis; L-glutamate 5-semialdehyde from L-glutamate: step 2/2. Catalyzes the NADPH-dependent reduction of L-glutamate 5-phosphate into L-glutamate 5-semialdehyde and phosphate. The product spontaneously undergoes cyclization to form 1-pyrroline-5-carboxylate. The sequence is that of Gamma-glutamyl phosphate reductase from Limosilactobacillus reuteri (strain DSM 20016) (Lactobacillus reuteri).